The chain runs to 298 residues: ATP phosphoribosyltransferase (298 aa).

The protein belongs to the ATP phosphoribosyltransferase family. Long subfamily. Mg(2+) serves as cofactor.

It is found in the cytoplasm. It carries out the reaction 1-(5-phospho-beta-D-ribosyl)-ATP + diphosphate = 5-phospho-alpha-D-ribose 1-diphosphate + ATP. The protein operates within amino-acid biosynthesis; L-histidine biosynthesis; L-histidine from 5-phospho-alpha-D-ribose 1-diphosphate: step 1/9. With respect to regulation, feedback inhibited by histidine. Its function is as follows. Catalyzes the condensation of ATP and 5-phosphoribose 1-diphosphate to form N'-(5'-phosphoribosyl)-ATP (PR-ATP). Has a crucial role in the pathway because the rate of histidine biosynthesis seems to be controlled primarily by regulation of HisG enzymatic activity. In Photobacterium profundum (strain SS9), this protein is ATP phosphoribosyltransferase (hisG).